The following is a 160-amino-acid chain: uncharacterized protein (160 aa).

It localises to the mitochondrion. This is an uncharacterized protein from Arabidopsis thaliana (Mouse-ear cress).